We begin with the raw amino-acid sequence, 144 residues long: Granulocyte-macrophage colony-stimulating factor (144 aa).

The N-terminal stretch at 1 to 17 is a signal peptide; sequence MWLQGLLLLGTVACSIS. O-linked (GalNAc...) serine glycosylation occurs at serine 24. Threonine 27 carries O-linked (GalNAc...) threonine glycosylation. Residues asparagine 44 and asparagine 54 are each glycosylated (N-linked (GlcNAc...) asparagine). Intrachain disulfides connect cysteine 71/cysteine 113 and cysteine 105/cysteine 138.

The protein belongs to the GM-CSF family. As to quaternary structure, monomer. The signaling GM-CSF receptor complex is a dodecamer of two head-to-head hexamers of two alpha, two beta, and two ligand subunits.

It localises to the secreted. Cytokine that stimulates the growth and differentiation of hematopoietic precursor cells from various lineages, including granulocytes, macrophages, eosinophils and erythrocytes. The protein is Granulocyte-macrophage colony-stimulating factor (CSF2) of Chlorocebus aethiops (Green monkey).